The primary structure comprises 267 residues: Small ribosomal subunit protein uS10m (267 aa).

The N-terminal 10 residues, 1–10, are a transit peptide targeting the mitochondrion; the sequence is MLSRILGVRN.

It belongs to the universal ribosomal protein uS10 family. In terms of assembly, part of the mitochondrial small ribosomal subunit.

The protein localises to the mitochondrion. Involved in mitochondrial genome encoded proteins translation. Involved in the binding of tRNA to the ribosomes. The protein is Small ribosomal subunit protein uS10m (RSM10) of Debaryomyces hansenii (strain ATCC 36239 / CBS 767 / BCRC 21394 / JCM 1990 / NBRC 0083 / IGC 2968) (Yeast).